The sequence spans 284 residues: D-tagatose-1,6-bisphosphate aldolase subunit GatY (284 aa).

Asp82 acts as the Proton donor in catalysis. The Zn(2+) site is built by His83 and His180. Gly181 lines the dihydroxyacetone phosphate pocket. His208 lines the Zn(2+) pocket. Residues 209 to 211 and 230 to 233 contribute to the dihydroxyacetone phosphate site; these read GAS and NVAT.

This sequence belongs to the class II fructose-bisphosphate aldolase family. TagBP aldolase GatY subfamily. As to quaternary structure, forms a complex with GatZ. The cofactor is Zn(2+).

It catalyses the reaction D-tagatofuranose 1,6-bisphosphate = D-glyceraldehyde 3-phosphate + dihydroxyacetone phosphate. It functions in the pathway carbohydrate metabolism; D-tagatose 6-phosphate degradation; D-glyceraldehyde 3-phosphate and glycerone phosphate from D-tagatose 6-phosphate: step 2/2. Catalytic subunit of the tagatose-1,6-bisphosphate aldolase GatYZ, which catalyzes the reversible aldol condensation of dihydroxyacetone phosphate (DHAP or glycerone-phosphate) with glyceraldehyde 3-phosphate (G3P) to produce tagatose 1,6-bisphosphate (TBP). Requires GatZ subunit for full activity and stability. Is involved in the catabolism of galactitol. This is D-tagatose-1,6-bisphosphate aldolase subunit GatY from Shigella flexneri.